We begin with the raw amino-acid sequence, 349 residues long: Transmembrane protein 255A (349 aa).

4 consecutive transmembrane segments (helical) span residues 30–50 (IYVT…GLAA), 57–77 (VTVG…LGII), 89–109 (LVAS…CAIV), and 226–246 (TILN…LGGF). The disordered stretch occupies residues 301–329 (VFPSSPPSGLSDEPQSASPSPSYMWSSSA). Residues 316–329 (SASPSPSYMWSSSA) show a composition bias toward low complexity.

This sequence belongs to the TMEM255 family.

The protein resides in the membrane. In Macaca fascicularis (Crab-eating macaque), this protein is Transmembrane protein 255A (TMEM255A).